Here is a 240-residue protein sequence, read N- to C-terminus: Putative exosome complex component RRP41 (240 aa).

The protein belongs to the RNase PH family. As to quaternary structure, component of the RNA exosome complex.

The protein resides in the cytoplasm. It localises to the nucleus. Its subcellular location is the nucleolus. It is found in the nucleoplasm. Its function is as follows. Non-catalytic component of the RNA exosome complex which has 3'-&gt;5' exoribonuclease activity and participates in a multitude of cellular RNA processing and degradation events. This Caenorhabditis elegans protein is Putative exosome complex component RRP41 (exos-4.1).